The primary structure comprises 496 residues: Adenosylhomocysteinase (496 aa).

Thr-68, Asp-157, and Glu-219 together coordinate substrate. 220–222 (TTT) is a binding site for NAD(+). Residues Lys-249 and Asp-253 each coordinate substrate. NAD(+) is bound by residues Asn-254, 283–288 (GYGDVG), Glu-306, Asn-341, 362–364 (IGH), and Asn-410.

Belongs to the adenosylhomocysteinase family. NAD(+) is required as a cofactor.

It localises to the cytoplasm. It catalyses the reaction S-adenosyl-L-homocysteine + H2O = L-homocysteine + adenosine. It participates in amino-acid biosynthesis; L-homocysteine biosynthesis; L-homocysteine from S-adenosyl-L-homocysteine: step 1/1. In terms of biological role, may play a key role in the regulation of the intracellular concentration of adenosylhomocysteine. This chain is Adenosylhomocysteinase, found in Mycolicibacterium paratuberculosis (strain ATCC BAA-968 / K-10) (Mycobacterium paratuberculosis).